The chain runs to 410 residues: MSSRSSWSSTEQINRTISSRADDLPPQPRRLEVVSKQATRVTALSTKLEWKIEQFEKLMKLIKNGSNLISRMFSVPDAPTVCWELHVYPNGKRDEDVNNVSFFLRQVGLARGEEPIMTEFQIYALDANNQRVSVCRDTKDFTNQQGRGKFQVSRDKMLGALRSDGTLFLICEVEYFPPGSKISVEPVVDEDVSTEEQEEMPEVIVRANNRSMWEDELFTDCVIHVGNKHIKAHRCILGQNSPVFKSMFSSPNMIEAQKGEIHIEDAKYDSVRAMVEFMYTGATESLESQGNIDEILAIADKYEVLMLKDQCERLIAQTINLKNVTQIAMFSDTYTADYLKSAVIRFLTTHHRVVIKTQDWISLKKSRHELANELLEAVLSTDQDDDDVTSNIPISVSPPPARKRLRRSAK.

Residues 1–19 (MSSRSSWSSTEQINRTISS) show a composition bias toward polar residues. Residues 1–29 (MSSRSSWSSTEQINRTISSRADDLPPQPR) form a disordered region. An MATH domain is found at 45–173 (STKLEWKIEQ…DGTLFLICEV (129 aa)). Residues 219–287 (TDCVIHVGNK…MYTGATESLE (69 aa)) form the BTB domain. A disordered region spans residues 389-410 (TSNIPISVSPPPARKRLRRSAK). Positions 401–410 (ARKRLRRSAK) are enriched in basic residues.

Interacts with cul-3.

It functions in the pathway protein modification; protein ubiquitination. Its function is as follows. Probable substrate-specific adapter of an E3 ubiquitin-protein ligase complex which mediates the ubiquitination and subsequent proteasomal degradation of target proteins. This Caenorhabditis elegans protein is BTB and MATH domain-containing protein 42 (bath-42).